We begin with the raw amino-acid sequence, 434 residues long: Trigger factor (434 aa).

The region spanning 160-245 is the PPIase FKBP-type domain; that stretch reads GDKVKMNFVG…LTEVLAANLP (86 aa).

The protein belongs to the FKBP-type PPIase family. Tig subfamily.

The protein resides in the cytoplasm. It carries out the reaction [protein]-peptidylproline (omega=180) = [protein]-peptidylproline (omega=0). Its function is as follows. Involved in protein export. Acts as a chaperone by maintaining the newly synthesized protein in an open conformation. Functions as a peptidyl-prolyl cis-trans isomerase. The sequence is that of Trigger factor from Shewanella sp. (strain ANA-3).